We begin with the raw amino-acid sequence, 202 residues long: MMRTGEIHRVTGETDVQVRLNLDGSGQCQASTGVAFLDHMLQQISSHGLIDLEISARGDTHIDDHHTNEDVGIAVGQALAQALGDRRGIHRFGHFLAPLDEALVQVALDCSGRPHLSYSLSIPSQKIGTYDTELVKEFFVAVVNNSGLTLHIRQLDGANSHHIVEACFKAFARALRQATEIDPRRADAVPSSKGVLEQAGMN.

It belongs to the imidazoleglycerol-phosphate dehydratase family.

The protein resides in the cytoplasm. The enzyme catalyses D-erythro-1-(imidazol-4-yl)glycerol 3-phosphate = 3-(imidazol-4-yl)-2-oxopropyl phosphate + H2O. The protein operates within amino-acid biosynthesis; L-histidine biosynthesis; L-histidine from 5-phospho-alpha-D-ribose 1-diphosphate: step 6/9. This chain is Imidazoleglycerol-phosphate dehydratase, found in Synechococcus sp. (strain WH7803).